Consider the following 330-residue polypeptide: Aspartate--ammonia ligase (330 aa).

Belongs to the class-II aminoacyl-tRNA synthetase family. AsnA subfamily.

The protein localises to the cytoplasm. It catalyses the reaction L-aspartate + NH4(+) + ATP = L-asparagine + AMP + diphosphate + H(+). The protein operates within amino-acid biosynthesis; L-asparagine biosynthesis; L-asparagine from L-aspartate (ammonia route): step 1/1. This chain is Aspartate--ammonia ligase, found in Actinobacillus succinogenes (strain ATCC 55618 / DSM 22257 / CCUG 43843 / 130Z).